The following is a 63-amino-acid chain: Hyphancin-3D (63 aa).

The N-terminal stretch at 1-22 is a signal peptide; sequence MNFSRIIFLVFACFVALASVSA. Positions 23-26 are cleaved as a propeptide — removed by a dipeptidylpeptidase; that stretch reads APEP. Leucine amide is present on Leu61.

Belongs to the cecropin family.

Its subcellular location is the secreted. Has antibacterial activity. The polypeptide is Hyphancin-3D (Hyphantria cunea (Fall webworm moth)).